Reading from the N-terminus, the 360-residue chain is Peptide chain release factor 1 (360 aa).

Gln-237 bears the N5-methylglutamine mark.

This sequence belongs to the prokaryotic/mitochondrial release factor family. In terms of processing, methylated by PrmC. Methylation increases the termination efficiency of RF1.

It is found in the cytoplasm. In terms of biological role, peptide chain release factor 1 directs the termination of translation in response to the peptide chain termination codons UAG and UAA. In Ectopseudomonas mendocina (strain ymp) (Pseudomonas mendocina), this protein is Peptide chain release factor 1.